We begin with the raw amino-acid sequence, 417 residues long: UDP-N-acetylglucosamine 1-carboxyvinyltransferase (417 aa).

22-23 (KN) serves as a coordination point for phosphoenolpyruvate. R93 is a binding site for UDP-N-acetyl-alpha-D-glucosamine. C117 acts as the Proton donor in catalysis. C117 is subject to 2-(S-cysteinyl)pyruvic acid O-phosphothioketal. UDP-N-acetyl-alpha-D-glucosamine contacts are provided by residues 122–126 (RPVDQ), D305, and I327.

It belongs to the EPSP synthase family. MurA subfamily.

It is found in the cytoplasm. The catalysed reaction is phosphoenolpyruvate + UDP-N-acetyl-alpha-D-glucosamine = UDP-N-acetyl-3-O-(1-carboxyvinyl)-alpha-D-glucosamine + phosphate. It participates in cell wall biogenesis; peptidoglycan biosynthesis. Functionally, cell wall formation. Adds enolpyruvyl to UDP-N-acetylglucosamine. This chain is UDP-N-acetylglucosamine 1-carboxyvinyltransferase, found in Nitrosomonas europaea (strain ATCC 19718 / CIP 103999 / KCTC 2705 / NBRC 14298).